The primary structure comprises 384 residues: Zinc metalloproteinase nas-12 (384 aa).

The signal sequence occupies residues 1–25; sequence MLYIPQFSIYFCLGYLLLFCKISNA. One can recognise a Peptidase M12A domain in the interval 73–271; sequence VSIKGSSMNR…EKLNRLGQCG (199 aa). Disulfide bonds link cysteine 116–cysteine 270, cysteine 137–cysteine 156, cysteine 287–cysteine 325, cysteine 296–cysteine 318, and cysteine 305–cysteine 322. Histidine 164 serves as a coordination point for Zn(2+). Glutamate 165 is an active-site residue. The Zn(2+) site is built by histidine 168 and histidine 174. Positions 287-325 constitute a ShKT 1 domain; the sequence is CQDVATAVSCEGNRRRGMCKNPFYKQMMIKSCQKTCRLC. Asparagine 340 is a glycosylation site (N-linked (GlcNAc...) asparagine). 3 cysteine pairs are disulfide-bonded: cysteine 348–cysteine 384, cysteine 355–cysteine 377, and cysteine 364–cysteine 381. The ShKT 2 domain occupies 348 to 384; sequence CEDKHPRCDIYSHNGFCTLPFYDDVRYQLCAKTCNLC.

It depends on Zn(2+) as a cofactor. In terms of tissue distribution, expressed in pharyngeal glands.

It localises to the secreted. Metalloprotease. This Caenorhabditis elegans protein is Zinc metalloproteinase nas-12 (nas-12).